The chain runs to 353 residues: Phosphoribosylformylglycinamidine cyclo-ligase (353 aa).

This sequence belongs to the AIR synthase family.

The protein localises to the cytoplasm. It carries out the reaction 2-formamido-N(1)-(5-O-phospho-beta-D-ribosyl)acetamidine + ATP = 5-amino-1-(5-phospho-beta-D-ribosyl)imidazole + ADP + phosphate + H(+). It functions in the pathway purine metabolism; IMP biosynthesis via de novo pathway; 5-amino-1-(5-phospho-D-ribosyl)imidazole from N(2)-formyl-N(1)-(5-phospho-D-ribosyl)glycinamide: step 2/2. This is Phosphoribosylformylglycinamidine cyclo-ligase from Methylocella silvestris (strain DSM 15510 / CIP 108128 / LMG 27833 / NCIMB 13906 / BL2).